The following is a 141-amino-acid chain: Hemoglobin subunit mu (141 aa).

One can recognise a Globin domain in the interval 1–141; the sequence is MLSAQERAQI…VAVVLTEKYR (141 aa). Heme b is bound by residues His-58 and His-87.

Belongs to the globin family. In terms of tissue distribution, expressed in erythroid tissues.

The chain is Hemoglobin subunit mu (HBM) from Homo sapiens (Human).